The chain runs to 292 residues: Ventral anterior homeobox 2 (292 aa).

Residues 1-36 (MGDGGAERDRGPKRREEPGGRSGRHGEHRGAEDLRA) are compositionally biased toward basic and acidic residues. The segment at 1 to 74 (MGDGGAERDR…DGQQALGETD (74 aa)) is disordered. A DNA-binding region (homeobox) is located at residues 102 to 161 (PKRTRTSFTAEQLYRLEMEFQRCQYVVGRERTELARQLNLSETQVKVWFQNRRTKQKKDQ). The segment at 207–242 (LPGLPASHRGTSLVDPRNSSPRLNPMPSASASSPLP) is disordered.

The protein belongs to the EMX homeobox family. As to expression, expressed in the developing and mature retina.

The protein resides in the nucleus. In terms of biological role, transcription factor that may function in dorsoventral specification of the forebrain. Regulates the expression of Wnt signaling antagonists including the expression of a truncated TCF7L2 isoform that cannot bind CTNNB1 and acts therefore as a potent dominant-negative Wnt antagonist. Plays a crucial role in eye development and, in particular, in the specification of the ventral optic vesicle. May be a regulator of axial polarization in the retina. The protein is Ventral anterior homeobox 2 (Vax2) of Mus musculus (Mouse).